Here is a 91-residue protein sequence, read N- to C-terminus: DNA/RNA-binding protein Alba (91 aa).

Residue Lys11 is modified to N6-acetyllysine.

It belongs to the histone-like Alba family. Post-translationally, acetylated. Acetylation at Lys-11 decreases DNA-binding affinity.

It localises to the cytoplasm. The protein resides in the chromosome. In terms of biological role, binds double-stranded DNA tightly but without sequence specificity. Incubation with DNA in vitro gives fibrous structures 10.3 +/- 1.1 nm in thickness (naked DNA is 1.83 +/- 0.37 nm). This protein does not significantly compact DNA. The chain is DNA/RNA-binding protein Alba from Thermococcus kodakarensis (strain ATCC BAA-918 / JCM 12380 / KOD1) (Pyrococcus kodakaraensis (strain KOD1)).